The primary structure comprises 509 residues: ATP synthase subunit alpha (509 aa).

Residue 169-176 (GDRQTGKT) participates in ATP binding.

It belongs to the ATPase alpha/beta chains family. In terms of assembly, F-type ATPases have 2 components, CF(1) - the catalytic core - and CF(0) - the membrane proton channel. CF(1) has five subunits: alpha(3), beta(3), gamma(1), delta(1), epsilon(1). CF(0) has three main subunits: a(1), b(2) and c(9-12). The alpha and beta chains form an alternating ring which encloses part of the gamma chain. CF(1) is attached to CF(0) by a central stalk formed by the gamma and epsilon chains, while a peripheral stalk is formed by the delta and b chains.

The protein resides in the cell inner membrane. The catalysed reaction is ATP + H2O + 4 H(+)(in) = ADP + phosphate + 5 H(+)(out). In terms of biological role, produces ATP from ADP in the presence of a proton gradient across the membrane. The alpha chain is a regulatory subunit. This is ATP synthase subunit alpha from Brucella ovis (strain ATCC 25840 / 63/290 / NCTC 10512).